The sequence spans 429 residues: tRNA threonylcarbamoyladenosine dehydratase 1 (429 aa).

The next 2 membrane-spanning stretches (helical) occupy residues 3–23 (NNTW…TQLA) and 74–94 (EQYI…TMLI). Residue Ser-259 is modified to Phosphoserine. Residues 279-299 (LPELGTMPGIFGLSIATWILT) traverse the membrane as a helical segment.

The protein belongs to the HesA/MoeB/ThiF family.

The protein localises to the mitochondrion outer membrane. In terms of biological role, catalyzes the ATP-dependent dehydration of threonylcarbamoyladenosine at position 37 (t(6)A37) to form cyclic t(6)A37 (ct(6)A37) in tRNAs that read codons beginning with adenine. This chain is tRNA threonylcarbamoyladenosine dehydratase 1 (TCD1), found in Saccharomyces cerevisiae (strain ATCC 204508 / S288c) (Baker's yeast).